Reading from the N-terminus, the 421-residue chain is Gamma-glutamyl phosphate reductase (421 aa).

It belongs to the gamma-glutamyl phosphate reductase family.

The protein localises to the cytoplasm. It catalyses the reaction L-glutamate 5-semialdehyde + phosphate + NADP(+) = L-glutamyl 5-phosphate + NADPH + H(+). It functions in the pathway amino-acid biosynthesis; L-proline biosynthesis; L-glutamate 5-semialdehyde from L-glutamate: step 2/2. Functionally, catalyzes the NADPH-dependent reduction of L-glutamate 5-phosphate into L-glutamate 5-semialdehyde and phosphate. The product spontaneously undergoes cyclization to form 1-pyrroline-5-carboxylate. This Azotobacter vinelandii (strain DJ / ATCC BAA-1303) protein is Gamma-glutamyl phosphate reductase.